We begin with the raw amino-acid sequence, 850 residues long: Protein stoned-A (850 aa).

The span at 1–16 shows a compositional bias: basic residues; the sequence is MLKLPKGLKKKKKKSK. Disordered stretches follow at residues 1–95 and 125–164; these read MLKL…AAGG and KESF…LGQI. The tract at residues 26 to 290 is interaction with Syt; that stretch reads ELEQYKRDLK…QNLLLSESIE (265 aa). Over residues 28–38 the composition is skewed to basic and acidic residues; that stretch reads EQYKRDLKAKQ. The segment covering 78 to 91 has biased composition (polar residues); sequence ILNAQQQLSDQNQG. Basic and acidic residues predominate over residues 136–164; sequence AEKKKQKEEEAARLEAEQQEREKQRLGQI. The DPF 1 signature appears at 224-226; sequence DPF. 2 disordered regions span residues 345–375 and 412–498; these read EEEE…EEDD and GSWA…PPFL. Residues 431 to 440 show a composition bias toward pro residues; that stretch reads PPPPVRPPTG. Positions 451–462 are enriched in acidic residues; it reads SEDEEENPEDDP. Short sequence motifs (DPF) lie at residues 461 to 463 and 535 to 537; these read DPF. Disordered stretches follow at residues 573–610, 634–673, 738–760, and 800–825; these read HSLS…QRKS, GNEL…TSHV, RKKL…FDTS, and LGLG…IDPF. 2 stretches are compositionally biased toward basic and acidic residues: residues 574–588 and 596–607; these read SLSD…DQKE and LEQKETDFDTAQ. 3 consecutive short sequence motifs (DPF) follow at residues 666 to 668, 755 to 757, and 823 to 825; these read DPF.

Interacts with the second C2 domain of Syt.

The protein localises to the cytoplasm. The protein resides in the synapse. It is found in the cytoplasmic vesicle. Its subcellular location is the secretory vesicle. It localises to the synaptic vesicle. Functionally, adapter protein involved in endocytic recycling of synaptic vesicles membranes. May act by mediating the retrieval of synaptotagmin protein Syt from the plasma membrane, thereby facilitating the internalization of multiple synaptic vesicles from the plasma membrane. This chain is Protein stoned-A (stnA), found in Drosophila melanogaster (Fruit fly).